The sequence spans 817 residues: Tax1-binding protein 1 homolog (817 aa).

2 positions are modified to phosphoserine: S124 and S138. Residues 144 to 628 are a coiled coil; sequence TTKAGLLELK…ENQAERKLEG (485 aa). The oligomerization stretch occupies residues 320–420; the sequence is EEISRLQFSL…ELKLSAVNKD (101 aa). Residues 609 to 627 show a composition bias toward basic and acidic residues; it reads SREKEHKRSVENQAERKLE. The segment at 609 to 685 is disordered; it reads SREKEHKRSV…ADGAFYPDEI (77 aa). The residue at position 617 (S617) is a Phosphoserine; by IKKA. The segment covering 628 to 643 has biased composition (polar residues); the sequence is GQNSQSPHQISQCLKT. S633 is subject to Phosphoserine. S694 is modified (phosphoserine; by IKKA). The disordered stretch occupies residues 704–742; that stretch reads SQPARNLSRPDGLEDPEDSKEDEKVPTAPDPPSQHLRGH. UBZ1-type zinc fingers lie at residues 755 to 781 and 782 to 808; these read QKKC…VESH and WKVC…VQTH. Positions 758, 761, 777, 781, 785, 788, 804, and 808 each coordinate Zn(2+).

As to quaternary structure, homooligomer. Interacts with TNFAIP3. Interacts with STARD13. Interacts with MYO6. Interacts with TOM1; the interaction is indirect and is mediated by MYO6, which acts as a bridge between TOM1 and TAX1BP1. Interacts with MAVS; this interaction induces MAVS polyubiquitination. Interacts with TNIP1. Interacts with TRAF6; this interaction mediates deubiquitination of TRAF6 and inhibition of NF-kappa-B activation. Interacts with RIPK1; this interaction negatively regulates RIPK1 ubiquitination. Interacts with NBR1. Interacts with TBK1. Interacts with RB1CC1. Interacts with SQSTM1. Interacts with AZI2. In terms of processing, phosphorylated in the C-terminal region by CHUK/IKKA leading to NF-kappa-B signaling down-regulation.

The protein localises to the cytoplasm. The protein resides in the mitochondrion. It localises to the preautophagosomal structure. Its subcellular location is the cytoplasmic vesicle. It is found in the autophagosome. Ubiquitin-binding adapter that participates in inflammatory, antiviral and innate immune processes as well as selective autophagy regulation. Plays a key role in the negative regulation of NF-kappa-B and IRF3 signalings by acting as an adapter for the ubiquitin-editing enzyme A20/TNFAIP3 to bind and inactivate its substrates. Disrupts the interactions between the E3 ubiquitin ligase TRAF3 and TBK1/IKBKE to attenuate 'Lys63'-linked polyubiquitination of TBK1 and thereby IFN-beta production. Also recruits A20/TNFAIP3 to ubiquitinated signaling proteins TRAF6 and RIPK1, leading to their deubiquitination and disruption of IL-1 and TNF-induced NF-kappa-B signaling pathways. Inhibits virus-induced apoptosis by inducing the 'Lys-48'-linked polyubiquitination and degradation of MAVS via recruitment of the E3 ligase ITCH, thereby attenuating MAVS-mediated apoptosis signaling. As a macroautophagy/autophagy receptor, facilitates the xenophagic clearance of pathogenic bacteria such as Salmonella typhimurium and Mycobacterium tuberculosis. Upon NBR1 recruitment to the SQSTM1-ubiquitin condensates, acts as the major recruiter of RB1CC1 to these ubiquitin condensates to promote their autophagic degradation. The protein is Tax1-binding protein 1 homolog (TAX1BP1) of Bos taurus (Bovine).